A 326-amino-acid chain; its full sequence is ATPase GET3 (326 aa).

32 to 39 (KGGVGKTT) serves as a coordination point for ATP. The active site involves D61. ATP is bound by residues E244 and N271. Positions 282 and 285 each coordinate Zn(2+).

Belongs to the arsA ATPase family. Homodimer.

It localises to the cytoplasm. The protein resides in the endoplasmic reticulum. ATPase required for the post-translational delivery of tail-anchored (TA) proteins to the endoplasmic reticulum. Recognizes and selectively binds the transmembrane domain of TA proteins in the cytosol. This complex then targets to the endoplasmic reticulum by membrane-bound receptors, where the tail-anchored protein is released for insertion. This process is regulated by ATP binding and hydrolysis. ATP binding drives the homodimer towards the closed dimer state, facilitating recognition of newly synthesized TA membrane proteins. ATP hydrolysis is required for insertion. Subsequently, the homodimer reverts towards the open dimer state, lowering its affinity for the membrane-bound receptor, and returning it to the cytosol to initiate a new round of targeting. This chain is ATPase GET3, found in Phaeosphaeria nodorum (strain SN15 / ATCC MYA-4574 / FGSC 10173) (Glume blotch fungus).